A 1176-amino-acid polypeptide reads, in one-letter code: MDEEGAPLSEGVQVVDPDVRAHVYSLVTALGGFNGESADRYVLGDDALACLRDIKRWLKLYDEKHNRMDVARCLGEANLVNGDLLPILTLWSTSGQKSKHMSRIALACLELLVPLTWPLEVHSEMTVNHHRHTPYLQQAQVLYKRGILSHGSGSILRTIIRIGLPSMAVPRSERTTRDEGILKLMLYFLRNIAVISPNARLAAEGDEEETSRSATINAFQNQDAFALLLTMCSNVGEDFSLQDVVLLEILFHIVKGVNVEKLFMNDAQRKAKRTDELGELLQKESSLRREYAKNAPTRHGRFGTMIWVKRDDAKVSTVSGQDVLKDSQTTLHKMDQSKKWNKPQIRRRAAEVTANNDFNTPVNINSTATKNLRMFVEEFLDSGFNPLFTHVRKAIEREADRVMDINTRQFFYTVAWFLEAERVRRAHQREKRHLGDTPLKEIEPDSFALVASVLNQETFVFLNRSMQYSYDNKDVEDLTAEMRCFTQILLTVQEMAQSPLEEDQEIADNIQNRIFYEETTHDRIVAIVRGYKDQGFGYLDACTELAHVFLRMLEHYSKENVDMHVRSRRRAKRKAKQAKQADIEGDDEEEASEEEDLMDVERISKERKFDFRRFAAKFCNQSCVDTFIAFTKYYRELNVDQLKRAHRYFYRIAFKQEMSVLLFRLDIINLFYRMIKGPGALDSNKPIFKEWEELVRQIIRRMIKKIDQRPALITELLFSKINSTVFYLEYGHEKQTISASKRPPAELEVEPREAKTIDEKIRIVVHVMVKDEHTDLVKWVSDVLNSAADEREAWESQEQHSGGQKAPNPMIPVKSDNESCQKAMFSNAKLRLLMSLVRFERLGMEDVPGASWVVPSSLNSQELRHTRSIIEQCLTEPVTENSDRDLSQLIRRKSGNNTRRDRDDQMANVDFGSDSEGDDNVPDGPLFPPNPRSRANALEQLKKQRKKRRKQAGEEEEPDEEDLEARRRARLENALARQAKIKSDLYIHASDEETDEEADQEFFRLEEQRRKEQAERIRKALLHGVVEEVSENSRKKSSGRKRQSDQYTASTADSQSKRQRRLQQTEGLDGNDDLVVAGTEARSPDSLGQGSPSLKGANDVEDTLVTSEENELDFDDDLAFSRNRTRDKVLSAENDDSDTEPPAPDTIDEDGEEAAAVAAPPRRRVRAGFVIESDSE.

Disordered regions lie at residues 569 to 597, 791 to 815, 879 to 965, 977 to 1000, and 1021 to 1159; these read RRAK…EEDL, REAW…PVKS, TENS…DLEA, RQAK…EADQ, and LLHG…AVAA. Residues 583-597 are compositionally biased toward acidic residues; that stretch reads IEGDDEEEASEEEDL. Residues 954–963 show a composition bias toward acidic residues; the sequence is EEEEPDEEDL. The span at 981–991 shows a compositional bias: basic and acidic residues; it reads IKSDLYIHASD. Polar residues predominate over residues 1045–1054; it reads DQYTASTADS. The segment covering 1108 to 1118 has biased composition (acidic residues); it reads EENELDFDDDL.

The protein belongs to the timeless family. As to quaternary structure, component of the fork protection complex (FPC) consisting of tof1 and csm3.

It is found in the nucleus. Functionally, forms a fork protection complex (FPC) with csm3 and which is required for chromosome segregation during meiosis and DNA damage repair. FPC coordinates leading and lagging strand synthesis and moves with the replication fork. FPC stabilizes replication forks in a configuration that is recognized by replication checkpoint sensors. This chain is Topoisomerase 1-associated factor 1 (tof1), found in Aspergillus fumigatus (strain ATCC MYA-4609 / CBS 101355 / FGSC A1100 / Af293) (Neosartorya fumigata).